The primary structure comprises 370 residues: Binary larvicide subunit BinA (370 aa).

Positions 1 to 6 are excised as a propeptide; sequence MRNLDF. Residues 1–155 are beta-trefoil domain; that stretch reads MRNLDFIDSF…LISNKEQIYL (155 aa). Cys31 and Cys47 form a disulfide bridge. A pore-forming domain region spans residues 156–370; sequence TLPSLPENEQ…NTKIITDDQN (215 aa).

This sequence belongs to the toxin_10 family. As to quaternary structure, forms a heterodimer with BinB. In terms of processing, processed by proteases in the mosquito gut, probably at both the N- and C-termini.

It localises to the spore. It is found in the perispore. Component of a binary toxin active against Culex and some Aedes mosquito larvae; mortality towards both C.quinquefasciatus and A.atropalpus is maximal by 48 hours. A.aegypti is not very susceptible to this toxin. Binary toxin internalization into host gut cells requires both proteins. The polypeptide is Binary larvicide subunit BinA (binA) (Lysinibacillus sphaericus (Bacillus sphaericus)).